Here is a 79-residue protein sequence, read N- to C-terminus: Acyl carrier protein (79 aa).

The 76-residue stretch at 2–77 (SDIEQRVKKI…QAIDYAKAHV (76 aa)) folds into the Carrier domain. Ser-37 is modified (O-(pantetheine 4'-phosphoryl)serine).

The protein belongs to the acyl carrier protein (ACP) family. Post-translationally, 4'-phosphopantetheine is transferred from CoA to a specific serine of apo-ACP by AcpS. This modification is essential for activity because fatty acids are bound in thioester linkage to the sulfhydryl of the prosthetic group.

It localises to the cytoplasm. The protein operates within lipid metabolism; fatty acid biosynthesis. In terms of biological role, carrier of the growing fatty acid chain in fatty acid biosynthesis. In Janthinobacterium sp. (strain Marseille) (Minibacterium massiliensis), this protein is Acyl carrier protein.